The following is a 267-amino-acid chain: MNALLTNPFKERLRKGEVQIGLWLSSTTSYMAEIAATSGYDWLLIDGEHAPNTIQDLYHQLQAVAPYASQPVIRPVEGSKSLIKQVLDIGAQTLLIPMVDTADQARQVASATRYPPYGERGVGASVARAARWGRIENYMAQVNDSLCLLVQVESKTALDNLDEILDVEGIDGVFIGPADLSASLGYPDNAGHPEVQRIIETSIRRIRAAGKAAGFLAVAPDMAQQCLAWGANFVAVGVDTMLYSDALDQRLAMFKSGKNGPRIKGSY.

The active-site Proton acceptor is histidine 49. Substrate is bound at residue glutamine 151. Glutamate 153 lines the Mg(2+) pocket. Substrate is bound by residues alanine 178 and aspartate 179. A Mg(2+)-binding site is contributed by aspartate 179.

This sequence belongs to the HpcH/HpaI aldolase family. KDR aldolase subfamily. In terms of assembly, homohexamer. Mg(2+) is required as a cofactor.

It carries out the reaction 2-dehydro-3-deoxy-L-rhamnonate = (S)-lactaldehyde + pyruvate. In terms of biological role, catalyzes the reversible retro-aldol cleavage of 2-keto-3-deoxy-L-rhamnonate (KDR) to pyruvate and lactaldehyde. In Shigella sonnei (strain Ss046), this protein is 2-keto-3-deoxy-L-rhamnonate aldolase.